We begin with the raw amino-acid sequence, 941 residues long: Pre-mRNA-processing factor 6 (941 aa).

A disordered region spans residues 1–79 (MNKKKKPFLG…DEDLNDTNYD (79 aa)). Positions 39–65 (DANDPVDDRHAPPGKRTVGDQMKKNQA) are enriched in basic and acidic residues. The span at 66–78 (ADDDDEDLNDTNY) shows a compositional bias: acidic residues. S143 bears the Phosphoserine mark. Phosphothreonine occurs at positions 180, 266, and 275. The residue at position 279 (S279) is a Phosphoserine. 9 HAT repeats span residues 384 to 416 (TDIRAKKRVLRKALEHVPNSVRLWKAAVELEEP), 418 to 444 (DARIMLSRAVECCPTSVELWLALARLE), 445 to 476 (TYENARKVLNKARENIPTDRHIWITAAKLEEA), 554 to 586 (NALECARAIYAYALQVFPSKKSVWLRAAYFGKN), 588 to 620 (GTRESLEALLQRAVAHCPKAEVLWLMGAKSKWL), 622 to 654 (GDVPAARSILALAFQANPNSEEIWLAAVKLESE), 689 to 721 (DNIRAAQDLCEEALRHYEDFPKLWMMKGQIEEQ), 723 to 755 (EMMEKAREAYNQGLKKCPHSTPLWLLLSRLEEK), and 855 to 887 (RKITKAREWFHRTVKIDSDLGDAWAFFYKFELQ).

Identified in the spliceosome B complex. Identified in the spliceosome C complex. Associates with the U5 snRNP particle. Component of the U4/U6-U5 tri-snRNP complex composed of the U4, U6 and U5 snRNAs and at least PRPF3, PRPF4, PRPF6, PRPF8, PRPF31, SNRNP200, TXNL4A, SNRNP40, DDX23, CD2BP2, PPIH, SNU13, EFTUD2, SART1 and USP39, LSm proteins LSm2-8 and Sm proteins. Interacts with ARAF1. Interacts with AR and NR3C1, but not ESR1, independently of the presence of hormones. Interacts with USH1G. Post-translationally, phosphorylated by PRP4K during spliceosome assembly.

It is found in the nucleus. Its subcellular location is the nucleoplasm. It localises to the nucleus speckle. In terms of biological role, involved in pre-mRNA splicing as component of the U4/U6-U5 tri-snRNP complex, one of the building blocks of the spliceosome. Enhances dihydrotestosterone-induced transactivation activity of AR, as well as dexamethasone-induced transactivation activity of NR3C1, but does not affect estrogen-induced transactivation. In Pongo abelii (Sumatran orangutan), this protein is Pre-mRNA-processing factor 6 (PRPF6).